We begin with the raw amino-acid sequence, 486 residues long: Glutamyl-tRNA(Gln) amidotransferase subunit A (486 aa).

Catalysis depends on charge relay system residues Lys76 and Ser151. The active-site Acyl-ester intermediate is Ser175.

The protein belongs to the amidase family. GatA subfamily. Heterotrimer of A, B and C subunits.

The catalysed reaction is L-glutamyl-tRNA(Gln) + L-glutamine + ATP + H2O = L-glutaminyl-tRNA(Gln) + L-glutamate + ADP + phosphate + H(+). Allows the formation of correctly charged Gln-tRNA(Gln) through the transamidation of misacylated Glu-tRNA(Gln) in organisms which lack glutaminyl-tRNA synthetase. The reaction takes place in the presence of glutamine and ATP through an activated gamma-phospho-Glu-tRNA(Gln). This Marinomonas sp. (strain MWYL1) protein is Glutamyl-tRNA(Gln) amidotransferase subunit A.